We begin with the raw amino-acid sequence, 244 residues long: Phosphoadenosine 5'-phosphosulfate reductase (244 aa).

Cys-239 acts as the Nucleophile; cysteine thiosulfonate intermediate in catalysis.

It belongs to the PAPS reductase family. CysH subfamily.

It localises to the cytoplasm. The catalysed reaction is [thioredoxin]-disulfide + sulfite + adenosine 3',5'-bisphosphate + 2 H(+) = [thioredoxin]-dithiol + 3'-phosphoadenylyl sulfate. The protein operates within sulfur metabolism; hydrogen sulfide biosynthesis; sulfite from sulfate: step 3/3. Functionally, catalyzes the formation of sulfite from phosphoadenosine 5'-phosphosulfate (PAPS) using thioredoxin as an electron donor. This chain is Phosphoadenosine 5'-phosphosulfate reductase, found in Escherichia coli O6:K15:H31 (strain 536 / UPEC).